Reading from the N-terminus, the 73-residue chain is Bacterioferritin-associated ferredoxin (73 aa).

C4 and C6 together coordinate [2Fe-2S] cluster. Phosphate contacts are provided by R26 and R29. The [2Fe-2S] cluster site is built by C38 and C41. K46 is a binding site for phosphate.

Belongs to the Bfd family. Monomer. Interacts with BfrB; up to 12 Bfd proteins can bind to the BfrB bacterioferritin complex (BFR). One Bfd protein binds to a BfrB dimer in the BFR, with the [2Fe-2S] cluster positioned about 22 Angstroms above the heme of BfrB. Does not interact with FtnA. The cofactor is [2Fe-2S] cluster. Phosphate serves as cofactor.

In terms of biological role, required for mobilization of iron from the bacterioferritin (BFR) complex, composed of BfrB and FtnA in varying proportions; mobilization requires the [2Fe-2S] cluster of this protein. Reduction of the BfrB heme group occurs in the presence of Bfd, strongly suggesting that the BfrB-Bfd complex allows heme to mediate electron transfer from FPR to the Fe(3+) iron core in the BFR prior to its release as Fe(2+). The polypeptide is Bacterioferritin-associated ferredoxin (Pseudomonas aeruginosa (strain ATCC 15692 / DSM 22644 / CIP 104116 / JCM 14847 / LMG 12228 / 1C / PRS 101 / PAO1)).